The chain runs to 453 residues: MPHAVLDTARNFLRSFITPRRILVAVSGGSDSMGLLVALHSAIAADERRGFSLAACTVDHALRPQSACEAEDVAAFCAALGIAHRICRWEGAKPSTGIQAAARNKRYELLAEAADALGADCIAIGHTRDDQQETVAMRIARGKGDGAGDGQGEGHGGAGMAASMLYGRRIWVLRPFLGLARAEIRSFLQARGVSWIDDPSNANPAFERVRVRARIATSGGMPTPLGNGRQRAASSARAAALIEKRIRVHEALVAEVSARHAGEIDDPDWRRALLTVASVLGGREHMPAFATVQRLSQFLRSGEPGRMTAGRVVFDRRASGLYLYREARNLPVLAVGPGRQGAWDGRFTVKSRGPAVTVAADASGRLWTKRLIDAGLPAGIAKRGSTVAPEIASTDGAGLAFGEAPAQVEYHIGLYDTFLPGFDRIMADAVAVSFGRDRYPAPPVHDVLIEMET.

Position 27 to 32 (27 to 32) interacts with ATP; sequence SGGSDS.

It belongs to the tRNA(Ile)-lysidine synthase family.

It localises to the cytoplasm. It carries out the reaction cytidine(34) in tRNA(Ile2) + L-lysine + ATP = lysidine(34) in tRNA(Ile2) + AMP + diphosphate + H(+). Its function is as follows. Ligates lysine onto the cytidine present at position 34 of the AUA codon-specific tRNA(Ile) that contains the anticodon CAU, in an ATP-dependent manner. Cytidine is converted to lysidine, thus changing the amino acid specificity of the tRNA from methionine to isoleucine. This chain is tRNA(Ile)-lysidine synthase, found in Rhizobium meliloti (strain 1021) (Ensifer meliloti).